A 175-amino-acid chain; its full sequence is ATP synthase subunit b 1 (175 aa).

Residues 26–48 traverse the membrane as a helical segment; that stretch reads IINLAIIIGVLYVYGSKFIGNIL.

It belongs to the ATPase B chain family. F-type ATPases have 2 components, F(1) - the catalytic core - and F(0) - the membrane proton channel. F(1) has five subunits: alpha(3), beta(3), gamma(1), delta(1), epsilon(1). F(0) has four main subunits: a(1), b(1), b'(1) and c(10-14). The alpha and beta chains form an alternating ring which encloses part of the gamma chain. F(1) is attached to F(0) by a central stalk formed by the gamma and epsilon chains, while a peripheral stalk is formed by the delta, b and b' chains.

It localises to the cellular thylakoid membrane. Functionally, f(1)F(0) ATP synthase produces ATP from ADP in the presence of a proton or sodium gradient. F-type ATPases consist of two structural domains, F(1) containing the extramembraneous catalytic core and F(0) containing the membrane proton channel, linked together by a central stalk and a peripheral stalk. During catalysis, ATP synthesis in the catalytic domain of F(1) is coupled via a rotary mechanism of the central stalk subunits to proton translocation. Component of the F(0) channel, it forms part of the peripheral stalk, linking F(1) to F(0). The polypeptide is ATP synthase subunit b 1 (Picosynechococcus sp. (strain ATCC 27264 / PCC 7002 / PR-6) (Agmenellum quadruplicatum)).